The chain runs to 327 residues: tRNA dimethylallyltransferase (327 aa).

14-21 is an ATP binding site; it reads GPTASGKT. 16–21 lines the substrate pocket; that stretch reads TASGKT. Interaction with substrate tRNA regions lie at residues 39–42 and 163–167; these read DSAL and QRIQR.

Belongs to the IPP transferase family. In terms of assembly, monomer. Mg(2+) serves as cofactor.

The enzyme catalyses adenosine(37) in tRNA + dimethylallyl diphosphate = N(6)-dimethylallyladenosine(37) in tRNA + diphosphate. Functionally, catalyzes the transfer of a dimethylallyl group onto the adenine at position 37 in tRNAs that read codons beginning with uridine, leading to the formation of N6-(dimethylallyl)adenosine (i(6)A). The protein is tRNA dimethylallyltransferase of Xanthomonas axonopodis pv. citri (strain 306).